The sequence spans 96 residues: ATP-dependent Clp protease adapter protein ClpS (96 aa).

This sequence belongs to the ClpS family. As to quaternary structure, binds to the N-terminal domain of the chaperone ClpA.

Functionally, involved in the modulation of the specificity of the ClpAP-mediated ATP-dependent protein degradation. In Campylobacter jejuni subsp. jejuni serotype O:6 (strain 81116 / NCTC 11828), this protein is ATP-dependent Clp protease adapter protein ClpS.